The primary structure comprises 491 residues: Anthranilate synthase component 1 (491 aa).

L-tryptophan-binding positions include Ser49 and Pro271–Leu273. Gly306–Thr307 contributes to the chorismate binding site. Glu333 is a binding site for Mg(2+). Chorismate contacts are provided by residues Tyr421, Arg441, Gly455–Gly457, and Gly457. A Mg(2+)-binding site is contributed by Glu470.

Belongs to the anthranilate synthase component I family. Heterotetramer consisting of two non-identical subunits: a beta subunit (TrpG) and a large alpha subunit (TrpE). Requires Mg(2+) as cofactor.

The enzyme catalyses chorismate + L-glutamine = anthranilate + pyruvate + L-glutamate + H(+). It functions in the pathway amino-acid biosynthesis; L-tryptophan biosynthesis; L-tryptophan from chorismate: step 1/5. Feedback inhibited by tryptophan. Part of a heterotetrameric complex that catalyzes the two-step biosynthesis of anthranilate, an intermediate in the biosynthesis of L-tryptophan. In the first step, the glutamine-binding beta subunit (TrpG) of anthranilate synthase (AS) provides the glutamine amidotransferase activity which generates ammonia as a substrate that, along with chorismate, is used in the second step, catalyzed by the large alpha subunit of AS (TrpE) to produce anthranilate. In the absence of TrpG, TrpE can synthesize anthranilate directly from chorismate and high concentrations of ammonia. This is Anthranilate synthase component 1 (trpE) from Neisseria meningitidis serogroup B (strain ATCC BAA-335 / MC58).